The chain runs to 552 residues: Probable glucomannan 4-beta-mannosyltransferase 10 (552 aa).

A helical membrane pass occupies residues 62 to 82 (IVPLFKCLVAFCLIISLLVFI). Asp161 is an active-site residue. 2 residues coordinate substrate: Asp220 and Asp222. Residue Asp314 is part of the active site. 4 helical membrane passes run 393–413 (IIVHCFTFIFYCVILPTSVFF), 430–450 (ITLCIVIATPRSFYLVIFWIL), 509–529 (EIMVGIYILCCACYGLFFGNT), and 530–550 (LLYLYLFMQAVAFLISGVGFV).

The protein belongs to the glycosyltransferase 2 family. Plant cellulose synthase-like A subfamily.

The protein resides in the golgi apparatus membrane. It carries out the reaction GDP-mannose + (glucomannan)n = GDP + (glucomannan)n+1.. Functionally, probable mannan synthase which consists of a 4-beta-mannosyltransferase activity on mannan using GDP-mannose. The beta-1,4-mannan product is the backbone for galactomannan synthesis by galactomannan galactosyltransferase. Galactomannan is a noncellulosic polysaccharides of plant cell wall. The sequence is that of Probable glucomannan 4-beta-mannosyltransferase 10 from Arabidopsis thaliana (Mouse-ear cress).